A 466-amino-acid chain; its full sequence is MGINCLNIFRRGLHTSSARLQVIQSTTPTKRICIVGAGPAGFYAAQLILKQLDNCVVDVVEKLPVPFGLVRFGVAPDHPEVKNVINTFTKTAEHPRLRYFGNISLGTDVSLRELRDRYHAVLLTYGADQDRQLELENEQLDNVISARKFVAWYNGLPGAENLAPDLSGRDVTIVGQGNVAVDVARMLLSPLDALKTTDTTEYALEALSCSQVERVHLVGRRGPLQAAFTIKELREMLKLPNVDTRWRTEDFSGIDMQLDKLQRPRKRLTELMLKSLKEQGRISGSKQFLPIFLRAPKAIAPGEMEFSVTELQQEAAVPTSSTERLPSHLILRSIGYKSSCVDTGINFDTRRGRVHNINGRILKDDATGEVDPGLYVAGWLGTGPTGVIVTTMNGAFAVAKTICDDINTNALDTSSVKPGYDADGKRVVTWDGWQRINDFESAAGKAKGKPREKIVSIEEMLRVAGV.

FAD is bound by residues Ala-40, Glu-61, Leu-69, and Leu-105. Residues 176–179 (QGNV), 220–221 (RR), and Glu-232 each bind NADP(+). Residues Trp-379 and 386–388 (GVI) contribute to the FAD site. An NADP(+)-binding site is contributed by Gly-386.

Belongs to the ferredoxin--NADP reductase type 1 family. Requires FAD as cofactor. As to expression, expressed predominantly in prothoracic gland of the larval ring gland and nurse cells of the adult ovary. Low expression is all adult tissues examined.

It localises to the mitochondrion inner membrane. The catalysed reaction is 2 reduced [adrenodoxin] + NADP(+) + H(+) = 2 oxidized [adrenodoxin] + NADPH. Its pathway is steroid metabolism; cholesterol metabolism. In terms of biological role, required for synthesis of steroid hormones, for olfactory sensory behavior and completion of the second larval molt (a steroid mediated developmental transition) and pupariation. This Drosophila melanogaster (Fruit fly) protein is NADPH:adrenodoxin oxidoreductase, mitochondrial (dare).